The primary structure comprises 411 residues: Lissencephaly-1 homolog (411 aa).

Positions 9–41 (QREELNQAIADYLGSNGYADSLETFRKEADLST) constitute a LisH domain. A coiled-coil region spans residues 56–83 (TSVIRLQKKVMDLEAKLTEAEKEVIEGA). 7 WD repeats span residues 106–147 (GHRA…RSLK), 148–187 (GHTD…ECVK), 191–230 (GHDH…CVKT), 233–272 (GHRE…CKVE), 275–334 (DHEH…CLLT), 337–376 (GHDN…CMKT), and 379–411 (AHQH…WECR).

This sequence belongs to the WD repeat LIS1/nudF family.

It localises to the cytoplasm. The protein localises to the cytoskeleton. It is found in the microtubule organizing center. Its subcellular location is the centrosome. Its function is as follows. Positively regulates the activity of the minus-end directed microtubule motor protein dynein. May enhance dynein-mediated microtubule sliding by targeting dynein to the microtubule plus end. Required for several dynein- and microtubule-dependent processes. This chain is Lissencephaly-1 homolog, found in Drosophila mojavensis (Fruit fly).